The following is a 208-amino-acid chain: ATP phosphoribosyltransferase (208 aa).

It belongs to the ATP phosphoribosyltransferase family. Short subfamily. As to quaternary structure, heteromultimer composed of HisG and HisZ subunits.

The protein resides in the cytoplasm. It catalyses the reaction 1-(5-phospho-beta-D-ribosyl)-ATP + diphosphate = 5-phospho-alpha-D-ribose 1-diphosphate + ATP. The protein operates within amino-acid biosynthesis; L-histidine biosynthesis; L-histidine from 5-phospho-alpha-D-ribose 1-diphosphate: step 1/9. Functionally, catalyzes the condensation of ATP and 5-phosphoribose 1-diphosphate to form N'-(5'-phosphoribosyl)-ATP (PR-ATP). Has a crucial role in the pathway because the rate of histidine biosynthesis seems to be controlled primarily by regulation of HisG enzymatic activity. In Hydrogenovibrio crunogenus (strain DSM 25203 / XCL-2) (Thiomicrospira crunogena), this protein is ATP phosphoribosyltransferase.